The chain runs to 409 residues: Serine/threonine transporter SstT (409 aa).

Helical transmembrane passes span 17-37 (LVGQIIVGLIAGLLLASFFPA), 49-69 (FVSALKAVAPVLVFVLVMASI), 83-103 (ILLLYLVGTFSAAVVAVIASF), 142-162 (ALISANFIGILAWAIGLGIAF), 180-200 (VSLIVKVVIRFAPLGIFGLVA), 218-238 (LVVLLGCMLFVAFVVNPLIVF), 301-321 (GAAITITVLTLAAVHTLGIAV), 331-351 (VVASICACGASGVAGGSLLLI), and 357-377 (LFGIPSEVAMQVVAVGFIIAI).

It belongs to the dicarboxylate/amino acid:cation symporter (DAACS) (TC 2.A.23) family.

Its subcellular location is the cell inner membrane. It catalyses the reaction L-serine(in) + Na(+)(in) = L-serine(out) + Na(+)(out). The enzyme catalyses L-threonine(in) + Na(+)(in) = L-threonine(out) + Na(+)(out). Functionally, involved in the import of serine and threonine into the cell, with the concomitant import of sodium (symport system). This chain is Serine/threonine transporter SstT, found in Pseudomonas aeruginosa (strain LESB58).